Reading from the N-terminus, the 390-residue chain is Telobox protein 1 (390 aa).

Positions 30 to 57 are disordered; it reads ENPSKREVAQDVPGFERKPTKVRKPRVK. A compositionally biased stretch (basic and acidic residues) spans 32–48; the sequence is PSKREVAQDVPGFERKP. 2 HTH myb-type domains span residues 50–109 and 135–193; these read KVRK…PEDY and STRK…PERY. Residues 78-105 constitute a DNA-binding region (H-T-H motif); it reads WKKILLDERFHFTNRSPNDLKDRFRTIL. A disordered region spans residues 115–143; it reads NAKTHMGRPQKIPHTVGLSKSTRKERKQF. The segment at residues 162–189 is a DNA-binding region (H-T-H motif); the sequence is WTRISKDANLGLQNRRSTDLRDRFRNAF. 2 stretches are compositionally biased toward polar residues: residues 244–257 and 322–340; these read SNPN…TEQP and ISPS…SIQQ. 2 disordered regions span residues 244–278 and 316–390; these read SNPN…FTSQ and QPPS…DNRG. Residues 347 to 360 are compositionally biased toward low complexity; the sequence is PPLSSNTLNSSTLP.

It is found in the nucleus. Its function is as follows. General transcription factor with prominent roles in controlling histone levels and stability. Binds and regulates the activities of many promoters, including those controlling the expression of all four types of canonical histones. Is also involved in the centromeric loading of cnp1 and maintenance of centromere identity. Moreover, regulates the expression of cdc2, a protease capable of histone clipping. This Schizosaccharomyces pombe (strain 972 / ATCC 24843) (Fission yeast) protein is Telobox protein 1.